The primary structure comprises 528 residues: Alpha-amylase (528 aa).

Positions 1-28 (MNKKWLNIPALIALLAAIAFGSVAPAEA) are cleaved as a signal peptide. The Ca(2+) site is built by N168 and D228. Catalysis depends on D258, which acts as the Nucleophile. Residue H262 participates in Ca(2+) binding. E286 acts as the Proton donor in catalysis.

It belongs to the glycosyl hydrolase 13 family. In terms of assembly, monomer. Ca(2+) is required as a cofactor.

It carries out the reaction Endohydrolysis of (1-&gt;4)-alpha-D-glucosidic linkages in polysaccharides containing three or more (1-&gt;4)-alpha-linked D-glucose units.. The polypeptide is Alpha-amylase (Niallia circulans (Bacillus circulans)).